The sequence spans 160 residues: Regulatory protein RecX (160 aa).

Belongs to the RecX family.

The protein resides in the cytoplasm. In terms of biological role, modulates RecA activity. The protein is Regulatory protein RecX of Xanthomonas oryzae pv. oryzae (strain MAFF 311018).